Here is a 462-residue protein sequence, read N- to C-terminus: Citrate synthase, mitochondrial (462 aa).

The transit peptide at 1 to 21 directs the protein to the mitochondrion; it reads MRSINQLLKQASLSQKSQYNF. Catalysis depends on residues His-300, His-346, and Asp-401.

This sequence belongs to the citrate synthase family. In terms of assembly, homodimer.

It is found in the mitochondrion matrix. The protein localises to the cytoplasm. Its subcellular location is the cytoskeleton. It catalyses the reaction oxaloacetate + acetyl-CoA + H2O = citrate + CoA + H(+). It participates in carbohydrate metabolism; tricarboxylic acid cycle; isocitrate from oxaloacetate: step 1/2. Structural protein involved in oral morphogenesis and in pronuclear behavior during conjugation. Respiratory enzyme. The polypeptide is Citrate synthase, mitochondrial (Tetrahymena thermophila).